Reading from the N-terminus, the 576-residue chain is 9-cis-epoxycarotenoid dioxygenase NCED2, chloroplastic (576 aa).

The transit peptide at 1-34 directs the protein to the chloroplast; the sequence is MEVPIAAMTFAHPANVMTLASRQPKSKRSHISPA. Residues His270, His319, His385, and His563 each coordinate Fe cation.

It belongs to the carotenoid oxygenase family. The cofactor is Fe(2+).

It localises to the plastid. Its subcellular location is the chloroplast. The catalysed reaction is a 9-cis-epoxycarotenoid + O2 = a 12'-apo-carotenal + 2-cis,4-trans-xanthoxin. It carries out the reaction 9-cis-violaxanthin + O2 = (3S,5R,6S)-5,6-epoxy-3-hydroxy-5,6-dihydro-12'-apo-beta-caroten-12'-al + 2-cis,4-trans-xanthoxin. It catalyses the reaction 9'-cis-neoxanthin + O2 = (3S,5R,6R)-3,5-dihydroxy-6,7-didehydro-5,6-dihydro-12'-apo-beta-caroten-12'-al + 2-cis,4-trans-xanthoxin. Its function is as follows. Has a 11,12(11',12') 9-cis epoxycarotenoid cleavage activity. Catalyzes the first step of abscisic-acid biosynthesis from carotenoids. The protein is 9-cis-epoxycarotenoid dioxygenase NCED2, chloroplastic of Oryza sativa subsp. japonica (Rice).